The chain runs to 82 residues: Protein WFDC11 (82 aa).

The N-terminal stretch at 1-21 is a signal peptide; it reads MKPSWFPCLVFLCMLLLSALG.

It is found in the secreted. The polypeptide is Protein WFDC11 (Wfdc11) (Mus musculus (Mouse)).